Reading from the N-terminus, the 215-residue chain is Putative lipoprotein NMB1124/NMB1162 (215 aa).

An N-terminal signal peptide occupies residues 1–16 (MKPLILGLAAVLALSA). Cys-17 is lipidated: N-palmitoyl cysteine. Cys-17 carries S-diacylglycerol cysteine lipidation.

The protein localises to the cell membrane. The chain is Putative lipoprotein NMB1124/NMB1162 from Neisseria meningitidis serogroup B (strain ATCC BAA-335 / MC58).